The sequence spans 164 residues: Protein PPLZ02 (164 aa).

Residues 7–64 (RYRGFRQRHWGSWVSEIRHSILKTRIWQGTFESAEDAARAYDEAARLMCGTRARTNFP) constitute a DNA-binding region (AP2/ERF).

Its subcellular location is the nucleus. Essential for all lupin cells independent of the respective tissue. In Lupinus polyphyllus (Large-leaved lupine), this protein is Protein PPLZ02 (PPLZ02).